Here is a 293-residue protein sequence, read N- to C-terminus: Small ribosomal subunit protein uS2 (293 aa).

The disordered stretch occupies residues 265 to 293 (DGGDWAASSAPAPGGENWAEAQPAEGAKW).

The protein belongs to the universal ribosomal protein uS2 family. In terms of assembly, component of the small ribosomal subunit. Mature ribosomes consist of a small (40S) and a large (60S) subunit. The 40S subunit contains about 33 different proteins and 1 molecule of RNA (18S). The 60S subunit contains about 49 different proteins and 3 molecules of RNA (25S, 5.8S and 5S). Interacts with rps21.

Its subcellular location is the cytoplasm. In terms of biological role, required for the assembly and/or stability of the 40S ribosomal subunit. Required for the processing of the 20S rRNA-precursor to mature 18S rRNA in a late step of the maturation of 40S ribosomal subunits. In Emericella nidulans (strain FGSC A4 / ATCC 38163 / CBS 112.46 / NRRL 194 / M139) (Aspergillus nidulans), this protein is Small ribosomal subunit protein uS2 (rps0).